Reading from the N-terminus, the 228-residue chain is Ribose-5-phosphate isomerase A (228 aa).

Substrate contacts are provided by residues 27–30 (TGTT), 86–89 (DGAD), and 100–103 (KGGG). The active-site Proton acceptor is E109. A substrate-binding site is contributed by K127.

This sequence belongs to the ribose 5-phosphate isomerase family. As to quaternary structure, homodimer.

The enzyme catalyses aldehydo-D-ribose 5-phosphate = D-ribulose 5-phosphate. The protein operates within carbohydrate degradation; pentose phosphate pathway; D-ribose 5-phosphate from D-ribulose 5-phosphate (non-oxidative stage): step 1/1. Its function is as follows. Catalyzes the reversible conversion of ribose-5-phosphate to ribulose 5-phosphate. The protein is Ribose-5-phosphate isomerase A of Borrelia hermsii (strain HS1 / DAH).